Here is a 112-residue protein sequence, read N- to C-terminus: Phosphoribosyl-AMP cyclohydrolase (112 aa).

Mg(2+) is bound at residue D76. C77 serves as a coordination point for Zn(2+). Residues D78 and D80 each contribute to the Mg(2+) site. Zn(2+) contacts are provided by C93 and C100.

It belongs to the PRA-CH family. In terms of assembly, homodimer. The cofactor is Mg(2+). Zn(2+) is required as a cofactor.

It localises to the cytoplasm. The enzyme catalyses 1-(5-phospho-beta-D-ribosyl)-5'-AMP + H2O = 1-(5-phospho-beta-D-ribosyl)-5-[(5-phospho-beta-D-ribosylamino)methylideneamino]imidazole-4-carboxamide. It participates in amino-acid biosynthesis; L-histidine biosynthesis; L-histidine from 5-phospho-alpha-D-ribose 1-diphosphate: step 3/9. In terms of biological role, catalyzes the hydrolysis of the adenine ring of phosphoribosyl-AMP. In Streptococcus thermophilus (strain ATCC BAA-491 / LMD-9), this protein is Phosphoribosyl-AMP cyclohydrolase.